The sequence spans 422 residues: uncharacterized protein (422 aa).

Residues 1–23 form the signal peptide; the sequence is MLSLIPFTVCAFLALITSKGGSA.

In terms of tissue distribution, component of the acid-insoluble organic matrix of the aragonitic skeleton (at protein level).

Its subcellular location is the secreted. This is an uncharacterized protein from Acropora millepora (Staghorn coral).